The chain runs to 177 residues: uncharacterized protein (177 aa).

This is an uncharacterized protein from Treponema pallidum (strain Nichols).